The primary structure comprises 168 residues: MSRSRINGNFIDKTFSIVANILLRIIPTTSGEKEAFTYYRDGMSAQSEGNYAEALQNYYEATRLEIDPYDRSYILYNIGLIHTSNGEHTKALEYYSRALERNPFLPQAFNNMAVICHYRGEQAIRQGDSEIAEAWSDQAAEYWKQAIALTPGNYIEAHNWLKITGRFE.

TPR repeat units lie at residues 35–68, 72–105, and 120–153; these read AFTYYRDGMSAQSEGNYAEALQNYYEATRLEIDP, SYILYNIGLIHTSNGEHTKALEYYSRALERNPFL, and GEQAIRQGDSEIAEAWSDQAAEYWKQAIALTPGN.

This sequence belongs to the Ycf3 family.

The protein resides in the plastid. It is found in the chloroplast thylakoid membrane. Its function is as follows. Essential for the assembly of the photosystem I (PSI) complex. May act as a chaperone-like factor to guide the assembly of the PSI subunits. This Buxus microphylla (Littleleaf boxwood) protein is Photosystem I assembly protein Ycf3.